A 179-amino-acid chain; its full sequence is MKFLYDLFPVILFFIVYKLFGIYEATAAAIAATIAQIAWAKITTGKVDNALIMSGVIIVVFGGATLWLQDESFIKWKPTILYWVFTVGLLGSQWLFKRNLIRGLMEKQITMPDPIWSRLNLAWAIFFLLLGFLNLYVAYNYSTDLWVDFKLFGTMGLMFVFVIGQTLLLNKHITEQDKK.

Transmembrane regions (helical) follow at residues Phe3 to Tyr23, Asn49 to Gln69, Trp76 to Phe96, Leu119 to Tyr139, and Phe149 to Leu169.

The protein belongs to the YciB family.

It is found in the cell inner membrane. Plays a role in cell envelope biogenesis, maintenance of cell envelope integrity and membrane homeostasis. In Methylobacillus flagellatus (strain ATCC 51484 / DSM 6875 / VKM B-1610 / KT), this protein is Inner membrane-spanning protein YciB.